The chain runs to 90 residues: UPF0237 protein MJ1558 (90 aa).

An ACT domain is found at 5–79; it reads VVSVIGQDRT…EELGVQVIVQ (75 aa).

It belongs to the UPF0237 family.

The chain is UPF0237 protein MJ1558 from Methanocaldococcus jannaschii (strain ATCC 43067 / DSM 2661 / JAL-1 / JCM 10045 / NBRC 100440) (Methanococcus jannaschii).